We begin with the raw amino-acid sequence, 561 residues long: Arginine--tRNA ligase (561 aa).

The 'HIGH' region motif lies at 135–145 (ANPTGLLHMGN).

Belongs to the class-I aminoacyl-tRNA synthetase family. Monomer.

The protein localises to the cytoplasm. It catalyses the reaction tRNA(Arg) + L-arginine + ATP = L-arginyl-tRNA(Arg) + AMP + diphosphate. The sequence is that of Arginine--tRNA ligase from Desulfitobacterium hafniense (strain DSM 10664 / DCB-2).